The primary structure comprises 459 residues: NADH-ubiquinone oxidoreductase chain 4 (459 aa).

The next 13 membrane-spanning stretches (helical) occupy residues 22–42 (MIWI…LLFF), 60–80 (PLTT…IMAS), 94–112 (LYLS…TFTA), 113–133 (TELI…LVII), 145–165 (AGTY…IALI), 196–216 (WLAY…HLWL), 224–244 (PIAG…YGMM), 257–277 (MAYP…SISL), 284–303 (SLIA…AILI), 308–330 (SFTG…FCLA), 351–371 (LLPL…ALPP), 391–411 (TTLL…LYMF), and 435–455 (ILMF…DIIT).

This sequence belongs to the complex I subunit 4 family. As to quaternary structure, core subunit of respiratory chain NADH dehydrogenase (Complex I) which is composed of 45 different subunits.

The protein resides in the mitochondrion inner membrane. It catalyses the reaction a ubiquinone + NADH + 5 H(+)(in) = a ubiquinol + NAD(+) + 4 H(+)(out). Its function is as follows. Core subunit of the mitochondrial membrane respiratory chain NADH dehydrogenase (Complex I) which catalyzes electron transfer from NADH through the respiratory chain, using ubiquinone as an electron acceptor. Essential for the catalytic activity and assembly of complex I. This Gorilla gorilla gorilla (Western lowland gorilla) protein is NADH-ubiquinone oxidoreductase chain 4 (MT-ND4).